A 148-amino-acid polypeptide reads, in one-letter code: FAD synthase (148 aa).

ATP-binding positions include 14–15 (VF), 19–22 (HVGH), and Asp100.

This sequence belongs to the archaeal FAD synthase family. As to quaternary structure, homodimer. The cofactor is a divalent metal cation.

The catalysed reaction is FMN + ATP + H(+) = FAD + diphosphate. The protein operates within cofactor biosynthesis; FAD biosynthesis; FAD from FMN: step 1/1. In terms of biological role, catalyzes the transfer of the AMP portion of ATP to flavin mononucleotide (FMN) to produce flavin adenine dinucleotide (FAD) coenzyme. In Pyrococcus abyssi (strain GE5 / Orsay), this protein is FAD synthase.